The primary structure comprises 655 residues: Broad substrate specificity ATP-binding cassette transporter ABCG2 (655 aa).

Residues 1-395 are Cytoplasmic-facing; it reads MSSNSYEVSI…KNLLGNPQAS (395 aa). The ABC transporter domain maps to 36–285; it reads LSFHNICYRV…FGAIGFRCEP (250 aa). ATP-binding positions include 79-86, 183-189, E210, and H242; these read GPTGGGKS and RGVSGGE. The ABC transmembrane type-2 domain occupies 389–651; sequence LGNPQASIAQ…TIAYLKLLFL (263 aa). The helical transmembrane segment at 396–416 threads the bilayer; sequence IAQLIVTVFLGLVIGAIFYDL. At 417–428 the chain is on the extracellular side; the sequence is KNDPAGIQNRAG. Residues 429 to 449 form a helical membrane-spanning segment; sequence VLFFLTTNQCFSSVSAVELLV. Topologically, residues 450 to 477 are cytoplasmic; the sequence is VEKKLFIHEYISGYYRVSSYFFGKLLSD. A helical membrane pass occupies residues 478–498; sequence LLPMRMLPSIIFTCITYFLLG. Topologically, residues 499–506 are extracellular; that stretch reads LKPKVEAF. The chain crosses the membrane as a helical span at residues 507–527; it reads FIMMLTLMMVAYSASSMALAI. The Cytoplasmic portion of the chain corresponds to 528–535; that stretch reads AAGQSVVS. The chain crosses the membrane as a helical span at residues 536-556; that stretch reads IATLLMTISFVFMMIFSGLLV. The Extracellular segment spans residues 557-630; the sequence is NLKTVVPWLS…ISPWGLWKNH (74 aa). C592 and C608 are oxidised to a cystine. N-linked (GlcNAc...) asparagine glycans are attached at residues N596 and N600. Residues 631–651 traverse the membrane as a helical segment; the sequence is VALACMIVIFLTIAYLKLLFL. Over 652-655 the chain is Cytoplasmic; it reads KKFS.

The protein belongs to the ABC transporter superfamily. ABCG family. Eye pigment precursor importer (TC 3.A.1.204) subfamily. Homodimer; disulfide-linked. The minimal functional unit is a homodimer, but the major oligomeric form in plasma membrane is a homotetramer with possibility of higher order oligomerization up to homododecamers. In terms of processing, N-glycosylated. Glycosylation-deficient ABCG2 is normally expressed and functional. Post-translationally, phosphorylated. Phosphorylation may regulate the localization to the plasma membrane, the homooligomerization and therefore, the activity of the transporter.

It is found in the cell membrane. The protein resides in the apical cell membrane. Its subcellular location is the mitochondrion membrane. The enzyme catalyses ATP + H2O + xenobioticSide 1 = ADP + phosphate + xenobioticSide 2.. It carries out the reaction urate(in) + ATP + H2O = urate(out) + ADP + phosphate + H(+). The catalysed reaction is indoxyl sulfate(in) + ATP + H2O = indoxyl sulfate(out) + ADP + phosphate + H(+). It catalyses the reaction sphing-4-enine 1-phosphate(in) + ATP + H2O = sphing-4-enine 1-phosphate(out) + ADP + phosphate + H(+). The enzyme catalyses estrone 3-sulfate(in) + ATP + H2O = estrone 3-sulfate(out) + ADP + phosphate + H(+). It carries out the reaction dehydroepiandrosterone 3-sulfate(in) + ATP + H2O = dehydroepiandrosterone 3-sulfate(out) + ADP + phosphate + H(+). The catalysed reaction is 4-methylumbelliferone sulfate(in) + ATP + H2O = 4-methylumbelliferone sulfate(out) + ADP + phosphate + H(+). It catalyses the reaction 5,7-dimethyl-2-methylamino-4-(3-pyridylmethyl)-1,3-benzothiazol-6-yl beta-D-glucuronate(in) + ATP + H2O = 5,7-dimethyl-2-methylamino-4-(3-pyridylmethyl)-1,3-benzothiazol-6-yl beta-D-glucuronate(out) + ADP + phosphate + H(+). The enzyme catalyses 4-methylumbelliferone beta-D-glucuronate(in) + ATP + H2O = 4-methylumbelliferone beta-D-glucuronate(out) + ADP + phosphate + H(+). It carries out the reaction 5,7-dimethyl-2-methylamino-4-(3-pyridylmethyl)-1,3-benzothiazol-6-yl sulfate(in) + ATP + H2O = 5,7-dimethyl-2-methylamino-4-(3-pyridylmethyl)-1,3-benzothiazol-6-yl sulfate(out) + ADP + phosphate + H(+). The catalysed reaction is 17beta-estradiol 17-O-(beta-D-glucuronate)(in) + ATP + H2O = 17beta-estradiol 17-O-(beta-D-glucuronate)(out) + ADP + phosphate + H(+). It catalyses the reaction methotrexate(in) + ATP + H2O = methotrexate(out) + ADP + phosphate + H(+). The enzyme catalyses riboflavin(in) + ATP + H2O = riboflavin(out) + ADP + phosphate + H(+). It carries out the reaction pheophorbide a(in) + ATP + H2O = pheophorbide a(out) + ADP + phosphate + H(+). The catalysed reaction is itaconate(in) + ATP + H2O = itaconate(out) + ADP + phosphate + H(+). Its function is as follows. Broad substrate specificity ATP-dependent transporter of the ATP-binding cassette (ABC) family that actively extrudes a wide variety of physiological compounds, dietary toxins and xenobiotics from cells. Involved in porphyrin homeostasis, mediating the export of protoporphyrin IX (PPIX) from both mitochondria to cytosol and cytosol to extracellular space, it also functions in the cellular export of heme. Also mediates the efflux of sphingosine-1-P from cells. Acts as a urate exporter functioning in both renal and extrarenal urate excretion. In kidney, it also functions as a physiological exporter of the uremic toxin indoxyl sulfate. Also involved in the excretion of steroids like estrone 3-sulfate/E1S, 3beta-sulfooxy-androst-5-en-17-one/DHEAS, and other sulfate conjugates. Mediates the secretion of the riboflavin and biotin vitamins into milk. Extrudes pheophorbide a, a phototoxic porphyrin catabolite of chlorophyll, reducing its bioavailability. Plays an important role in the exclusion of xenobiotics from the brain. It confers to cells a resistance to multiple drugs and other xenobiotics including mitoxantrone, pheophorbide, camptothecin, methotrexate, azidothymidine, and the anthracyclines daunorubicin and doxorubicin, through the control of their efflux. In placenta, it limits the penetration of drugs from the maternal plasma into the fetus. May play a role in early stem cell self-renewal by blocking differentiation. In inflammatory macrophages, exports itaconate from the cytosol to the extracellular compartment and limits the activation of TFEB-dependent lysosome biogenesis involved in antibacterial innate immune response. The polypeptide is Broad substrate specificity ATP-binding cassette transporter ABCG2 (ABCG2) (Bos taurus (Bovine)).